The following is a 525-amino-acid chain: Nuclear pore glycoprotein p62 (525 aa).

An N-acetylserine modification is found at S2. Repeat copies occupy residues 6 to 7 (FG), 46 to 47 (FG), 78 to 79 (FG), 115 to 116 (FG), and 143 to 144 (FG). The segment at 6–144 (FGGTGAPAGG…GTAPTGFVFG (139 aa)) is 5 X 2 AA repeats of F-G. Residues 260 to 293 (LKAPGAAPGASTTSTTTTTTTTTTTASTSSSTTT) form a disordered region. A compositionally biased stretch (low complexity) spans 269–293 (ASTTSTTTTTTTTTTTASTSSSTTT). The interval 331–461 (MTYAQLESLI…QDLKDIIEHL (131 aa)) is required for centrosome localization. The stretch at 331–461 (MTYAQLESLI…QDLKDIIEHL (131 aa)) forms a coiled coil. A phosphoserine mark is found at S411 and S421. O-linked (GlcNAc) serine glycosylation occurs at S471.

Belongs to the nucleoporin NSP1/NUP62 family. In terms of assembly, component of the p62 complex, a complex at least composed of NUP62, NUP54, and NUP58. Interacts with NUP88. Interacts with NUTF2. Interacts with HIKESHI. Interacts with OSBPL8. Interacts with CAPG. Interacts with SAS6 and TUBG1 at the centrosome. Interacts with MCM3AP. The inner channel of the NPC has a different redox environment from the cytoplasm and allows the formation of interchain disulfide bonds between some nucleoporins, the significant increase of these linkages upon oxidative stress reduces the permeability of the NPC.

It localises to the nucleus. Its subcellular location is the nuclear pore complex. It is found in the cytoplasm. The protein resides in the cytoskeleton. The protein localises to the spindle pole. It localises to the nucleus envelope. Its subcellular location is the microtubule organizing center. It is found in the centrosome. In terms of biological role, essential component of the nuclear pore complex. The N-terminal is probably involved in nucleocytoplasmic transport. The C-terminal is involved in protein-protein interaction probably via coiled-coil formation, promotes its association with centrosomes and may function in anchorage of p62 to the pore complex. Plays a role in mitotic cell cycle progression by regulating centrosome segregation, centriole maturation and spindle orientation. It might be involved in protein recruitment to the centrosome after nuclear breakdown. The protein is Nuclear pore glycoprotein p62 (Nup62) of Rattus norvegicus (Rat).